Reading from the N-terminus, the 578-residue chain is Zinc finger protein 248 (578 aa).

Residues 8-78 enclose the KRAB domain; sequence VSFKDVCVDF…LEKGFPSQDP (71 aa). The C2H2-type 1; degenerate zinc-finger motif lies at 239-263; the sequence is TVCKYNECGRTFIESLKLNISQRPH. Lys340 is covalently cross-linked (Glycyl lysine isopeptide (Lys-Gly) (interchain with G-Cter in SUMO2)). C2H2-type zinc fingers lie at residues 379–401, 407–429, 435–457, 463–485, 491–513, 519–542, and 547–569; these read FECG…QRTH, YECT…QRTH, YECK…QRTH, YECN…QRTH, FICN…QRTH, YKCN…RTHT, and YECN…QRIH.

Belongs to the krueppel C2H2-type zinc-finger protein family.

The protein resides in the nucleus. In terms of biological role, may be involved in transcriptional regulation. In Pongo abelii (Sumatran orangutan), this protein is Zinc finger protein 248 (ZNF248).